Consider the following 501-residue polypeptide: Probable cytochrome P450 28d2 (501 aa).

C446 serves as a coordination point for heme.

Belongs to the cytochrome P450 family. Requires heme as cofactor.

It is found in the endoplasmic reticulum membrane. Its subcellular location is the microsome membrane. May be involved in the metabolism of insect hormones and in the breakdown of synthetic insecticides. This Drosophila melanogaster (Fruit fly) protein is Probable cytochrome P450 28d2 (Cyp28d2).